The chain runs to 395 residues: Phosphopentomutase (395 aa).

Residues D13, D288, H293, D329, H330, and H341 each contribute to the Mn(2+) site.

Belongs to the phosphopentomutase family. Requires Mn(2+) as cofactor.

The protein localises to the cytoplasm. It catalyses the reaction 2-deoxy-alpha-D-ribose 1-phosphate = 2-deoxy-D-ribose 5-phosphate. The catalysed reaction is alpha-D-ribose 1-phosphate = D-ribose 5-phosphate. Its pathway is carbohydrate degradation; 2-deoxy-D-ribose 1-phosphate degradation; D-glyceraldehyde 3-phosphate and acetaldehyde from 2-deoxy-alpha-D-ribose 1-phosphate: step 1/2. Isomerase that catalyzes the conversion of deoxy-ribose 1-phosphate (dRib-1-P) and ribose 1-phosphate (Rib-1-P) to deoxy-ribose 5-phosphate (dRib-5-P) and ribose 5-phosphate (Rib-5-P), respectively. The protein is Phosphopentomutase of Agathobacter rectalis (strain ATCC 33656 / DSM 3377 / JCM 17463 / KCTC 5835 / VPI 0990) (Eubacterium rectale).